The sequence spans 363 residues: UDP-N-acetylglucosamine--N-acetylmuramyl-(pentapeptide) pyrophosphoryl-undecaprenol N-acetylglucosamine transferase (363 aa).

Residues 12–14 (TAG), R166, S196, and Q291 each bind UDP-N-acetyl-alpha-D-glucosamine.

This sequence belongs to the glycosyltransferase 28 family. MurG subfamily.

It localises to the cell inner membrane. The enzyme catalyses di-trans,octa-cis-undecaprenyl diphospho-N-acetyl-alpha-D-muramoyl-L-alanyl-D-glutamyl-meso-2,6-diaminopimeloyl-D-alanyl-D-alanine + UDP-N-acetyl-alpha-D-glucosamine = di-trans,octa-cis-undecaprenyl diphospho-[N-acetyl-alpha-D-glucosaminyl-(1-&gt;4)]-N-acetyl-alpha-D-muramoyl-L-alanyl-D-glutamyl-meso-2,6-diaminopimeloyl-D-alanyl-D-alanine + UDP + H(+). It functions in the pathway cell wall biogenesis; peptidoglycan biosynthesis. Cell wall formation. Catalyzes the transfer of a GlcNAc subunit on undecaprenyl-pyrophosphoryl-MurNAc-pentapeptide (lipid intermediate I) to form undecaprenyl-pyrophosphoryl-MurNAc-(pentapeptide)GlcNAc (lipid intermediate II). In Legionella pneumophila (strain Lens), this protein is UDP-N-acetylglucosamine--N-acetylmuramyl-(pentapeptide) pyrophosphoryl-undecaprenol N-acetylglucosamine transferase.